An 88-amino-acid chain; its full sequence is Large ribosomal subunit protein bL27 (88 aa).

Residues 1 to 26 are disordered; it reads MAHKKGTGSTRNGRDSNSKRLGVKAY.

The protein belongs to the bacterial ribosomal protein bL27 family.

The sequence is that of Large ribosomal subunit protein bL27 from Prochlorococcus marinus (strain MIT 9211).